Reading from the N-terminus, the 356-residue chain is Dual-specificity RNA methyltransferase RlmN (356 aa).

The active-site Proton acceptor is glutamate 92. In terms of domain architecture, Radical SAM core spans 98–334; it reads EKDRGTLCIS…MRRTRGEDID (237 aa). Cysteine 105 and cysteine 337 are disulfide-bonded. Cysteine 112, cysteine 116, and cysteine 119 together coordinate [4Fe-4S] cluster. S-adenosyl-L-methionine-binding positions include 162–163, serine 194, 216–218, and asparagine 294; these read GE and SLH. Residue cysteine 337 is the S-methylcysteine intermediate of the active site.

This sequence belongs to the radical SAM superfamily. RlmN family. Requires [4Fe-4S] cluster as cofactor.

Its subcellular location is the cytoplasm. The enzyme catalyses adenosine(2503) in 23S rRNA + 2 reduced [2Fe-2S]-[ferredoxin] + 2 S-adenosyl-L-methionine = 2-methyladenosine(2503) in 23S rRNA + 5'-deoxyadenosine + L-methionine + 2 oxidized [2Fe-2S]-[ferredoxin] + S-adenosyl-L-homocysteine. It catalyses the reaction adenosine(37) in tRNA + 2 reduced [2Fe-2S]-[ferredoxin] + 2 S-adenosyl-L-methionine = 2-methyladenosine(37) in tRNA + 5'-deoxyadenosine + L-methionine + 2 oxidized [2Fe-2S]-[ferredoxin] + S-adenosyl-L-homocysteine. In terms of biological role, specifically methylates position 2 of adenine 2503 in 23S rRNA and position 2 of adenine 37 in tRNAs. m2A2503 modification seems to play a crucial role in the proofreading step occurring at the peptidyl transferase center and thus would serve to optimize ribosomal fidelity. This Vesicomyosocius okutanii subsp. Calyptogena okutanii (strain HA) protein is Dual-specificity RNA methyltransferase RlmN.